The chain runs to 215 residues: Adenylate kinase (215 aa).

10 to 15 (GAGKGT) contributes to the ATP binding site. Residues 30–59 (STGDMFRAAIKEGTELGKQAKALMDQGKLV) are NMP. Residues Thr-31, Arg-36, 57–59 (KLV), 85–88 (GFPR), and Gln-92 each bind AMP. Positions 122-159 (GRRVHQPSGRTYHIIYNPPKVAGQDDITGEELITRADD) are LID. Residues Arg-123 and 132–133 (TY) each bind ATP. Residues Arg-156 and Arg-167 each coordinate AMP. Lys-200 is an ATP binding site.

The protein belongs to the adenylate kinase family. Monomer.

The protein resides in the cytoplasm. The enzyme catalyses AMP + ATP = 2 ADP. It participates in purine metabolism; AMP biosynthesis via salvage pathway; AMP from ADP: step 1/1. Catalyzes the reversible transfer of the terminal phosphate group between ATP and AMP. Plays an important role in cellular energy homeostasis and in adenine nucleotide metabolism. This chain is Adenylate kinase, found in Haemophilus ducreyi (strain 35000HP / ATCC 700724).